The primary structure comprises 416 residues: Transcription termination factor Rho (416 aa).

The Rho RNA-BD domain maps to L51–K121. Residues G162–G167, K174–T179, and R205 contribute to the ATP site.

The protein belongs to the Rho family. Homohexamer. The homohexamer assembles into an open ring structure.

Facilitates transcription termination by a mechanism that involves Rho binding to the nascent RNA, activation of Rho's RNA-dependent ATPase activity, and release of the mRNA from the DNA template. This chain is Transcription termination factor Rho, found in Streptobacillus moniliformis (strain ATCC 14647 / DSM 12112 / NCTC 10651 / 9901).